Here is a 690-residue protein sequence, read N- to C-terminus: uncharacterized protein (690 aa).

The interval Asp553–Lys601 is disordered. Residues Asn560–Lys601 are compositionally biased toward basic and acidic residues.

It belongs to the glycosyltransferase 2 family.

This is an uncharacterized protein from Rickettsia bellii (strain RML369-C).